A 518-amino-acid polypeptide reads, in one-letter code: Zinc finger protein 449 (518 aa).

The 83-residue stretch at 30–112 (RQRFRQFQYR…SLIEDLQREL (83 aa)) folds into the SCAN box domain. Residues 292 to 304 (NPTLGETPENSNL) are compositionally biased toward polar residues. The disordered stretch occupies residues 292 to 325 (NPTLGETPENSNLEEPLNPKPHKKKSPGEKPHRC). 7 C2H2-type zinc fingers span residues 323–345 (HRCP…QRIH), 351–373 (HKCP…QRLH), 379–401 (YECT…QRTH), 407–429 (YKCL…LKTH), 435–457 (HRCH…QRTH), 463–485 (FKCN…LRIH), and 491–513 (YKCT…QVTH).

The protein belongs to the krueppel C2H2-type zinc-finger protein family.

The protein resides in the nucleus. In terms of biological role, may be involved in transcriptional regulation. The protein is Zinc finger protein 449 (ZNF449) of Gorilla gorilla gorilla (Western lowland gorilla).